The sequence spans 1351 residues: uncharacterized protein (1351 aa).

Basic and acidic residues predominate over residues 1–17 (MSKKDSKNSPKKSKDTN). The interval 1–31 (MSKKDSKNSPKKSKDTNSDESSSSNAETSSD) is disordered. Residues 19-31 (DESSSSNAETSSD) are compositionally biased toward low complexity.

This is an uncharacterized protein from Acanthamoeba polyphaga mimivirus (APMV).